The primary structure comprises 198 residues: Ribonuclease HII (198 aa).

In terms of domain architecture, RNase H type-2 spans 14-198; sequence GVIAGVDEVG…KNFAPISRAL (185 aa). A divalent metal cation is bound by residues Asp-20, Glu-21, and Asp-112.

Belongs to the RNase HII family. The cofactor is Mn(2+). It depends on Mg(2+) as a cofactor.

It localises to the cytoplasm. The enzyme catalyses Endonucleolytic cleavage to 5'-phosphomonoester.. Its function is as follows. Endonuclease that specifically degrades the RNA of RNA-DNA hybrids. The sequence is that of Ribonuclease HII from Wolbachia pipientis wMel.